The following is a 279-amino-acid chain: Probable thymidylate synthase (279 aa).

Residues Arg21 and 136–137 (RR) contribute to the dUMP site. The Nucleophile role is filled by Cys156. Residues 177 to 180 (RSVD), Asn188, and 218 to 220 (HIY) contribute to the dUMP site. Residue Asp180 participates in (6R)-5,10-methylene-5,6,7,8-tetrahydrofolate binding.

The protein belongs to the thymidylate synthase family.

It catalyses the reaction dUMP + (6R)-5,10-methylene-5,6,7,8-tetrahydrofolate = 7,8-dihydrofolate + dTMP. Sythesizes the thymine necessary for the viral DNA replication. The polypeptide is Probable thymidylate synthase (Escherichia coli (Enterobacteria phage T5)).